Here is a 193-residue protein sequence, read N- to C-terminus: MNLIPTVIEQTNRGERAYDIYSRLLKDRIIMLGSAIDDNVANSIVSQLLFLESQDPEKDIHIYINSPGGSITAGMAIYDTMQFIKPQVSTICIGMAASMGAFLLAAGEKGKRYALPNSEAMIHQPLGGAQGQATEIEIAAKRILFLREKLNQILADRTGQPLEVLQRDTDRDNFMTAEKALEYGLIDKIFTNR.

The active-site Nucleophile is serine 98. Residue histidine 123 is part of the active site.

This sequence belongs to the peptidase S14 family. As to quaternary structure, fourteen ClpP subunits assemble into 2 heptameric rings which stack back to back to give a disk-like structure with a central cavity, resembling the structure of eukaryotic proteasomes.

It is found in the cytoplasm. It catalyses the reaction Hydrolysis of proteins to small peptides in the presence of ATP and magnesium. alpha-casein is the usual test substrate. In the absence of ATP, only oligopeptides shorter than five residues are hydrolyzed (such as succinyl-Leu-Tyr-|-NHMec, and Leu-Tyr-Leu-|-Tyr-Trp, in which cleavage of the -Tyr-|-Leu- and -Tyr-|-Trp bonds also occurs).. Its function is as follows. Cleaves peptides in various proteins in a process that requires ATP hydrolysis. Has a chymotrypsin-like activity. Plays a major role in the degradation of misfolded proteins. In Bacillus anthracis, this protein is ATP-dependent Clp protease proteolytic subunit 2.